The chain runs to 96 residues: Conantokin Rl-B (96 aa).

Residues 1–21 (MQLYTYLYLLVPLVTFHLILG) form the signal peptide. Positions 22-78 (TGTLDHGDALTERRSTDATALKPEPVLLQKSSARSTNDNGKDTQMKRILKKRGNKAR) are excised as a propeptide. The interval 51-96 (KSSARSTNDNGKDTQMKRILKKRGNKARGEEELAEKAPEFARELAN) is disordered. Over residues 77–96 (ARGEEELAEKAPEFARELAN) the composition is skewed to basic and acidic residues. Glu-81 is a binding site for a divalent metal cation. Residues Glu-81, Glu-82, and Glu-85 each carry the 4-carboxyglutamate modification. A divalent metal cation is bound at residue Glu-85. Position 88 is a 4-hydroxyproline (Pro-88). 2 residues coordinate a divalent metal cation: Glu-89 and Glu-93. Residues Glu-89 and Glu-93 each carry the 4-carboxyglutamate modification. Asn-96 carries the asparagine amide modification.

Belongs to the conotoxin B superfamily. Requires Ca(2+) as cofactor. Mg(2+) serves as cofactor. Hydroxylation of Pro-88 is important for NR2B/GRIN2B NMDA receptor selectivity. Removal of hydroxylation does not change global NMDA receptor antagonism (tested on WT neurons), but it decreases the inhibitory potency on NR2B/GRIN2B NMDA receptors and increases the inhibitory potency on NR2A/GRIN2A NMDA receptors. Hydroxylation of Pro-88 locally disrupts a small region of the divalent cation-induced alpha-helix but does not destabilize the entire helix. Expressed by the venom duct.

It localises to the secreted. In terms of biological role, conantokins inhibit N-methyl-D-aspartate (NMDA) receptors. This toxin has antagonist activity on the NR2B/GRIN2B subunit (IC(50)=0.1 uM). In vivo, when delivered into the brain, is active has anticonvulsant activity in the model of epilepsy in mice. This chain is Conantokin Rl-B, found in Conus rolani (Cone snail).